Consider the following 465-residue polypeptide: Probable Xaa-Pro aminopeptidase pepP (465 aa).

The Mn(2+) site is built by Asp261, Asp272, Glu395, and Glu435.

It belongs to the peptidase M24B family. Mn(2+) serves as cofactor.

It carries out the reaction Release of any N-terminal amino acid, including proline, that is linked to proline, even from a dipeptide or tripeptide.. Its function is as follows. Catalyzes the removal of a penultimate prolyl residue from the N-termini of peptides. The chain is Probable Xaa-Pro aminopeptidase pepP (pepP) from Talaromyces marneffei (strain ATCC 18224 / CBS 334.59 / QM 7333) (Penicillium marneffei).